The primary structure comprises 358 residues: MATAVRSGRLSSWQSFCQWVTDTNNRIYIGWFGVLMIPCLLAATTCFIVAFIAAPPVDIDGIREPVAGSLLYGNNIISGAVVPSSNAIGLHFYPIWDAASLDEWLYNGGTYQLVVFHFLIGISAYMGRQWELSYRLGMRPWICVAYSAPLSAAMAVFLVYPFGQGSFSDGMPLGISGTFNFMLVFQAEHNILMHPFHMLGVAGVFGGSLFSAMHGSLVTSSLVRETTENESHNYGYKFGQEEETYNIVAAHGYFGRLIFQYASFNNSRSLHFLLGAWPVVGIWFTSMGVSTMAFNLNGFNFNQSILDSQGRVLNTWADMVNRAGLGMEVMHERNAHNFPLDLATVESTPVALQAPAIG.

3 consecutive transmembrane segments (helical) span residues 28-45, 117-132, and 141-155; these read YIGW…AATT, HFLI…QWEL, and WICV…AAMA. H117 is a chlorophyll a binding site. Y125 serves as a coordination point for pheophytin a. 2 residues coordinate [CaMn4O5] cluster: D169 and E188. A helical membrane pass occupies residues 196–217; the sequence is FHMLGVAGVFGGSLFSAMHGSL. H197 serves as a coordination point for chlorophyll a. A quinone-binding positions include H214 and 263–264; that span reads SF. H214 is a binding site for Fe cation. H271 serves as a coordination point for Fe cation. Residues 273–287 form a helical membrane-spanning segment; the sequence is LLGAWPVVGIWFTSM. Positions 331, 332, 341, and 343 each coordinate [CaMn4O5] cluster. A propeptide spanning residues 344 to 358 is cleaved from the precursor; the sequence is TVESTPVALQAPAIG.

This sequence belongs to the reaction center PufL/M/PsbA/D family. In terms of assembly, PSII is composed of 1 copy each of membrane proteins PsbA, PsbB, PsbC, PsbD, PsbE, PsbF, PsbH, PsbI, PsbJ, PsbK, PsbL, PsbM, PsbT, PsbX, PsbY, PsbZ, Psb30/Ycf12, peripheral proteins PsbO, CyanoQ (PsbQ), PsbU, PsbV and a large number of cofactors. It forms dimeric complexes. It depends on The D1/D2 heterodimer binds P680, chlorophylls that are the primary electron donor of PSII, and subsequent electron acceptors. It shares a non-heme iron and each subunit binds pheophytin, quinone, additional chlorophylls, carotenoids and lipids. D1 provides most of the ligands for the Mn4-Ca-O5 cluster of the oxygen-evolving complex (OEC). There is also a Cl(-1) ion associated with D1 and D2, which is required for oxygen evolution. The PSII complex binds additional chlorophylls, carotenoids and specific lipids. as a cofactor. In terms of processing, tyr-160 forms a radical intermediate that is referred to as redox-active TyrZ, YZ or Y-Z. Post-translationally, C-terminally processed by CtpA; processing is essential to allow assembly of the oxygen-evolving complex and thus photosynthetic growth.

The protein resides in the cellular thylakoid membrane. It carries out the reaction 2 a plastoquinone + 4 hnu + 2 H2O = 2 a plastoquinol + O2. Its function is as follows. Photosystem II (PSII) is a light-driven water:plastoquinone oxidoreductase that uses light energy to abstract electrons from H(2)O, generating O(2) and a proton gradient subsequently used for ATP formation. It consists of a core antenna complex that captures photons, and an electron transfer chain that converts photonic excitation into a charge separation. The D1/D2 (PsbA/PsbD) reaction center heterodimer binds P680, the primary electron donor of PSII as well as several subsequent electron acceptors. The polypeptide is Photosystem II protein D1 3 (Synechococcus sp. (strain CC9311)).